A 159-amino-acid polypeptide reads, in one-letter code: Transcriptional repressor NrdR (159 aa).

The disordered stretch occupies residues 1–21; sequence MRCPKCQHNKSNVIDSRQAED. A zinc finger spans residues 3–34; sequence CPKCQHNKSNVIDSRQAEDGNTIRRRRECDAC. In terms of domain architecture, ATP-cone spans 49–139; the sequence is LLVVKKDGTR…VYRSFKDVDE (91 aa).

It belongs to the NrdR family. Zn(2+) serves as cofactor.

Functionally, negatively regulates transcription of bacterial ribonucleotide reductase nrd genes and operons by binding to NrdR-boxes. The polypeptide is Transcriptional repressor NrdR (Streptococcus thermophilus (strain CNRZ 1066)).